A 341-amino-acid polypeptide reads, in one-letter code: Annexin A1 isoform p35 (341 aa).

Annexin repeat units follow at residues 37-108 (FDPS…ALLK), 109-180 (TPAQ…SLAK), 192-263 (ELAE…ALVK), and 267-338 (SKPA…ALCG).

Belongs to the annexin family. In terms of processing, in contrast to mammalian homologs, does not contain a tyrosine phosphorylation site in the N-terminal part.

The protein localises to the nucleus. The protein resides in the cytoplasm. It is found in the cell projection. It localises to the cilium. Its subcellular location is the basolateral cell membrane. Calcium/phospholipid-binding protein which promotes membrane fusion and is involved in exocytosis. This protein regulates phospholipase A2 activity. It seems to bind from two to four calcium ions with high affinity. This Columba livia (Rock dove) protein is Annexin A1 isoform p35 (CP35).